Here is a 447-residue protein sequence, read N- to C-terminus: GTPase Der (447 aa).

EngA-type G domains are found at residues 4-165 and 180-357; these read KIIT…PEEE and LQIV…KIWN. GTP-binding positions include 10-17, 57-61, 119-122, 186-193, 233-237, and 298-301; these read GRPNVGKS, DTPGL, NKCE, GRPNAGKS, DTAGL, and NKWD. A KH-like domain is found at 358-443; it reads KKITTSKLNE…PIRFTYVKTK (86 aa).

Belongs to the TRAFAC class TrmE-Era-EngA-EngB-Septin-like GTPase superfamily. EngA (Der) GTPase family. As to quaternary structure, associates with the 50S ribosomal subunit.

In terms of biological role, GTPase that plays an essential role in the late steps of ribosome biogenesis. This chain is GTPase Der, found in Rickettsia felis (strain ATCC VR-1525 / URRWXCal2) (Rickettsia azadi).